A 181-amino-acid polypeptide reads, in one-letter code: Minor capsid protein P4 (181 aa).

In terms of assembly, interacts with the major capsid protein.

It is found in the virion. Functionally, one of the minor capsid proteins that constitute a network internal to the major capsid proteins and outside the lipid membrane. The minor capsid proteins glue and stabilize the capsomers. This is Minor capsid protein P4 from Chlorella (PBCV-1).